A 480-amino-acid polypeptide reads, in one-letter code: Glutamate--tRNA ligase 2 (480 aa).

Residues 15-25 (PSPTGYLHVGG) carry the 'HIGH' region motif. The 'KMSKS' region signature appears at 248 to 252 (RLSKR). Lys-251 is an ATP binding site.

Belongs to the class-I aminoacyl-tRNA synthetase family. Glutamate--tRNA ligase type 1 subfamily. Monomer.

The protein resides in the cytoplasm. It carries out the reaction tRNA(Glu) + L-glutamate + ATP = L-glutamyl-tRNA(Glu) + AMP + diphosphate. Functionally, catalyzes the attachment of glutamate to tRNA(Glu) in a two-step reaction: glutamate is first activated by ATP to form Glu-AMP and then transferred to the acceptor end of tRNA(Glu). This is Glutamate--tRNA ligase 2 from Koribacter versatilis (strain Ellin345).